The primary structure comprises 877 residues: Probable alpha/beta-glucosidase agdC (877 aa).

The signal sequence occupies residues M1–A14. 3 N-linked (GlcNAc...) asparagine glycosylation sites follow: N171, N293, and N373. D422 (nucleophile) is an active-site residue. Residue E425 is part of the active site. The disordered stretch occupies residues D432–S476. Pro residues predominate over residues P447 to G463. A glycan (N-linked (GlcNAc...) asparagine) is linked at N508. The active-site Proton donor is the D573. N574, N610, and N744 each carry an N-linked (GlcNAc...) asparagine glycan.

Belongs to the glycosyl hydrolase 31 family.

The protein resides in the secreted. The enzyme catalyses Hydrolysis of terminal, non-reducing (1-&gt;4)-linked alpha-D-glucose residues with release of alpha-D-glucose.. It catalyses the reaction Hydrolysis of terminal, non-reducing beta-D-glucosyl residues with release of beta-D-glucose.. In terms of biological role, glucosidase involved in the degradation of cellulosic biomass. Has both alpha- and beta-glucosidase activity. This Aspergillus oryzae (strain ATCC 42149 / RIB 40) (Yellow koji mold) protein is Probable alpha/beta-glucosidase agdC (agdC).